The primary structure comprises 110 residues: Large ribosomal subunit protein uL24 (110 aa).

This sequence belongs to the universal ribosomal protein uL24 family. In terms of assembly, part of the 50S ribosomal subunit.

Its function is as follows. One of two assembly initiator proteins, it binds directly to the 5'-end of the 23S rRNA, where it nucleates assembly of the 50S subunit. One of the proteins that surrounds the polypeptide exit tunnel on the outside of the subunit. This Frankia alni (strain DSM 45986 / CECT 9034 / ACN14a) protein is Large ribosomal subunit protein uL24.